Consider the following 555-residue polypeptide: MRLIGMPKEKYDPPDPRRIYTIMSAEEVANGKKSHWAELEISGRVRSLSTSLWSLTHLTALHLNDNYLSRIPPDIAKLHNLVYLDLSSNKLRSLPAELGNMVSLRELLLNNNLLRVLPYELGRLFQLQTLGLKGNPLSQDILNLYQDPDGTRKLLNFMLDNLAVHPEQLPPRPWITLKERDQILPSASFTVMCYNVLCDKYATRQLYGYCPSWALNWEYRKKGIMEEIVNCDADIISLQEVETEQYFTLFLPALKERGYDGFFSPKSRAKIMSEQERKHVDGCAIFFKTEKFTLVQKHTVEFNQVAMANSDGSEAMLNRVMTKDNIGVAVVLEVHKELFGAGMKPIHAADKQLLIVANAHMHWDPEYSDVKLIQTMMFVSEVKNILEKASSRPGSPTADPNSIPLVLCADLNSLPDSGVVEYLSNGGVADNHKDFKELRYNECLMNFSCNGKNGSSEGRITHGFQLKSAYENNLMPYTNYTFDFKGVIDYIFYSKTHMNVLGVLGPLDPQWLVENNITGCPHPHIPSDHFSLLTQLELHPPLLPLVNGVHLPNRR.

The tract at residues Met1–Arg152 is required for interaction with CNOT1, CNOT3 and CNOT7. 4 LRR repeats span residues His57–Leu78, Asn80–Met101, Ser103–Phe125, and Gln126–Pro148. The interval Met158–Arg555 is nuclease domain. Glu240 contributes to the Mg(2+) binding site. Residues Glu240, Glu276, His360, and Pro365 each coordinate substrate. Asp410 contacts Mg(2+). Asp410 functions as the Proton donor/acceptor in the catalytic mechanism. Positions 412, 479, and 484 each coordinate substrate.

The protein belongs to the CCR4/nocturin family. Component of the CCR4-NOT complex; distinct complexes seem to exist that differ in the participation of probably mutually exclusive catalytic subunits; the complex contains two deadenylase subunits, CNOT6 or CNOT6L, and CNOT7 or CNOT8. Interacts with CNOT1, CNOT3, CNOT7, CNOT8 and CNOT9. Interacts with TOB1. Interacts with NANOS2. Interacts with ZFP36. Interacts with ZFP36L2. Interacts with RBM46. Mg(2+) is required as a cofactor. Highly expressed in placenta, skeletal muscle, pancreas, testis and leukocytes. Weakly expressed in heart, spleen and thymus.

The protein resides in the cytoplasm. Its subcellular location is the nucleus. It carries out the reaction Exonucleolytic cleavage of poly(A) to 5'-AMP.. Inhibited by free AMP, and with lesser efficiency also by CMP, GMP, UMP, ATP and neomycin. Has 3'-5' poly(A) exoribonuclease activity for synthetic poly(A) RNA substrate. Catalytic component of the CCR4-NOT complex which is one of the major cellular mRNA deadenylases and is linked to various cellular processes including bulk mRNA degradation, miRNA-mediated repression, translational repression during translational initiation and general transcription regulation. Additional complex functions may be a consequence of its influence on mRNA expression. May be involved in the deadenylation-dependent degradation of mRNAs through the 3'-UTR AU-rich element-mediated mechanism. Involved in deadenylation-dependent degradation of CDKN1B mRNA. Its mRNA deadenylase activity can be inhibited by TOB1. Mediates cell proliferation and cell survival and prevents cellular senescence. This Homo sapiens (Human) protein is CCR4-NOT transcription complex subunit 6-like (CNOT6L).